Reading from the N-terminus, the 269-residue chain is Putative imidazole glycerol phosphate synthase subunit hisF2 (269 aa).

Aspartate 133 is an active-site residue.

The protein belongs to the HisA/HisF family. Heterodimer of HisH and HisF.

Its subcellular location is the cytoplasm. The catalysed reaction is 5-[(5-phospho-1-deoxy-D-ribulos-1-ylimino)methylamino]-1-(5-phospho-beta-D-ribosyl)imidazole-4-carboxamide + L-glutamine = D-erythro-1-(imidazol-4-yl)glycerol 3-phosphate + 5-amino-1-(5-phospho-beta-D-ribosyl)imidazole-4-carboxamide + L-glutamate + H(+). Its pathway is amino-acid biosynthesis; L-histidine biosynthesis; L-histidine from 5-phospho-alpha-D-ribose 1-diphosphate: step 5/9. IGPS catalyzes the conversion of PRFAR and glutamine to IGP, AICAR and glutamate. The HisF subunit catalyzes the cyclization activity that produces IGP and AICAR from PRFAR using the ammonia provided by the HisH subunit. The chain is Putative imidazole glycerol phosphate synthase subunit hisF2 (hisF2) from Parasynechococcus marenigrum (strain WH8102).